A 166-amino-acid chain; its full sequence is Phosphopantetheine adenylyltransferase (166 aa).

S11 provides a ligand contact to substrate. ATP contacts are provided by residues S11–F12 and H19. Positions 43, 76, and 90 each coordinate substrate. ATP is bound by residues G91 to R93, E101, and L126 to S132.

The protein belongs to the bacterial CoaD family. As to quaternary structure, homohexamer. Mg(2+) is required as a cofactor.

The protein resides in the cytoplasm. The enzyme catalyses (R)-4'-phosphopantetheine + ATP + H(+) = 3'-dephospho-CoA + diphosphate. Its pathway is cofactor biosynthesis; coenzyme A biosynthesis; CoA from (R)-pantothenate: step 4/5. Functionally, reversibly transfers an adenylyl group from ATP to 4'-phosphopantetheine, yielding dephospho-CoA (dPCoA) and pyrophosphate. This is Phosphopantetheine adenylyltransferase from Streptococcus equi subsp. zooepidemicus (strain H70).